A 370-amino-acid chain; its full sequence is Cytochrome b (370 aa).

4 helical membrane passes run 25–45 (FGSMLLACLTLQLLTGFFLAV), 69–90 (WMMQNLHAIGASMFFICIYIHI), 105–125 (WFSGTTLLIMLMATAFFGYVL), and 170–190 (FFALHFILPFGIISLSSLHIL). Histidine 75 and histidine 89 together coordinate heme b. Histidine 174 and histidine 188 together coordinate heme b. Position 193 (histidine 193) interacts with a ubiquinone. 4 helical membrane-spanning segments follow: residues 218–238 (YKDMLMLTIMTIMLLTIVSFF), 280–300 (LGGALALTMSIMMLLTLPFTH), 312–332 (FMQLTFWTFTATFLVISWTAT), and 339–358 (FTTISQVAALMYFLFFISNP).

Belongs to the cytochrome b family. As to quaternary structure, the cytochrome bc1 complex contains 3 respiratory subunits (MT-CYB, CYC1 and UQCRFS1), 2 core proteins (UQCRC1 and UQCRC2) and probably 6 low-molecular weight proteins. Heme b is required as a cofactor.

The protein resides in the mitochondrion inner membrane. Component of the ubiquinol-cytochrome c reductase complex (complex III or cytochrome b-c1 complex) that is part of the mitochondrial respiratory chain. The b-c1 complex mediates electron transfer from ubiquinol to cytochrome c. Contributes to the generation of a proton gradient across the mitochondrial membrane that is then used for ATP synthesis. The protein is Cytochrome b (MT-CYB) of Chilabothrus strigilatus mccraniei (Ragged Island boa constrictor).